A 358-amino-acid chain; its full sequence is Aminodeoxyfutalosine deaminase (358 aa).

The Zn(2+) site is built by histidine 32 and histidine 34. Residues arginine 87, aspartate 154, and glycine 188 each contribute to the substrate site. A Zn(2+)-binding site is contributed by histidine 215. Glutamate 218 functions as the Proton donor in the catalytic mechanism. Aspartate 296 is a Zn(2+) binding site.

It belongs to the metallo-dependent hydrolases superfamily. Adenosine and AMP deaminases family. The cofactor is Zn(2+).

The enzyme catalyses 6-amino-6-deoxyfutalosine + H2O + H(+) = futalosine + NH4(+). Its pathway is quinol/quinone metabolism; menaquinone biosynthesis. Catalyzes the deamination of aminodeoxyfutalosine (AFL) into futalosine (FL), a step in the biosynthesis of menaquinone (MK, vitamin K2). To a lesser extent, can also deaminate adenosine, 5'-methylthioadenosine, 5'-deoxyadenosine, and 2'-deoxyadenosine. The sequence is that of Aminodeoxyfutalosine deaminase (add2) from Streptomyces avermitilis (strain ATCC 31267 / DSM 46492 / JCM 5070 / NBRC 14893 / NCIMB 12804 / NRRL 8165 / MA-4680).